Reading from the N-terminus, the 336-residue chain is D-alanine--D-alanine ligase (336 aa).

One can recognise an ATP-grasp domain in the interval 124–330 (KMWFSALGIP…FTEYLSLVIN (207 aa)). 154 to 209 (ALENWGSIFVKAASQGSSVGCYKVDDSSKVADVLKDAFGYAPYVIVEKTIKARELE) serves as a coordination point for ATP. The Mg(2+) site is built by Asp284, Glu297, and Asn299.

This sequence belongs to the D-alanine--D-alanine ligase family. Mg(2+) serves as cofactor. Requires Mn(2+) as cofactor.

It is found in the cytoplasm. The catalysed reaction is 2 D-alanine + ATP = D-alanyl-D-alanine + ADP + phosphate + H(+). The protein operates within cell wall biogenesis; peptidoglycan biosynthesis. Its function is as follows. Cell wall formation. This is D-alanine--D-alanine ligase from Shewanella sp. (strain ANA-3).